We begin with the raw amino-acid sequence, 195 residues long: Molybdenum cofactor guanylyltransferase (195 aa).

GTP is bound by residues 12-14 (LAG), K25, N53, D70, and D100. Mg(2+) is bound at residue D100.

This sequence belongs to the MobA family. As to quaternary structure, monomer. The cofactor is Mg(2+).

It localises to the cytoplasm. It catalyses the reaction Mo-molybdopterin + GTP + H(+) = Mo-molybdopterin guanine dinucleotide + diphosphate. Transfers a GMP moiety from GTP to Mo-molybdopterin (Mo-MPT) cofactor (Moco or molybdenum cofactor) to form Mo-molybdopterin guanine dinucleotide (Mo-MGD) cofactor. This Vibrio parahaemolyticus serotype O3:K6 (strain RIMD 2210633) protein is Molybdenum cofactor guanylyltransferase.